Reading from the N-terminus, the 309-residue chain is MDIQFLGTGAGQPSKARNVSSLALKLLDEINEVWLFDCGEGTQNRILETTIRPRKVSKIFITHLHGDHIFGLPGFLSSRAFQANEEQTDLEIYGPQGIKSFVLTSLRVSGSRLPYRIHFHEFDQDSLGKILETDKFTVYAEELDHTIFCVGYRVMQKDLEGTLDAKKLKAAGVPFGPLFGKIKNGQDLVLEDGTEIKAADYISAPRPGKIITILGDTRKTDASVRLAVNADVLVHESTYGKGDEKIARNHGHSTNMQAAQVAVEAGAKRLLLNHISARFLSKDISKLKKDAATIFENVHVVKDLEEVEI.

7 residues coordinate Zn(2+): His-63, His-65, Asp-67, His-68, His-145, Asp-216, and His-274. Catalysis depends on Asp-67, which acts as the Proton acceptor.

It belongs to the RNase Z family. Homodimer. Zn(2+) serves as cofactor.

It carries out the reaction Endonucleolytic cleavage of RNA, removing extra 3' nucleotides from tRNA precursor, generating 3' termini of tRNAs. A 3'-hydroxy group is left at the tRNA terminus and a 5'-phosphoryl group is left at the trailer molecule.. Its function is as follows. Zinc phosphodiesterase, which displays some tRNA 3'-processing endonuclease activity. Probably involved in tRNA maturation, by removing a 3'-trailer from precursor tRNA. This Streptococcus pneumoniae serotype 19F (strain G54) protein is Ribonuclease Z.